Here is a 239-residue protein sequence, read N- to C-terminus: Fatty acid metabolism regulator protein (239 aa).

One can recognise an HTH gntR-type domain in the interval 6-74 (KGPASFAEKY…HGKPTRVNNF (69 aa)). A DNA-binding region (H-T-H motif) is located at residues 34-53 (ERELSELIGVTRTTLREVLQ).

Homodimer.

The protein resides in the cytoplasm. In terms of biological role, multifunctional regulator of fatty acid metabolism. The sequence is that of Fatty acid metabolism regulator protein from Shewanella halifaxensis (strain HAW-EB4).